The following is a 413-amino-acid chain: Low-salt glycan biosynthesis hexosyltransferase Agl6 (413 aa).

The interval 1-27 (MSTRSQSESPVDAPQQGATNGQSASDI) is disordered. The segment covering 16 to 25 (QGATNGQSAS) has biased composition (polar residues). The next 4 helical transmembrane spans lie at 270 to 290 (LFSA…VLAW), 304 to 324 (TGIG…FGAF), 355 to 375 (IGSV…FTWV), and 389 to 409 (VVAT…FLLG).

The protein belongs to the glycosyltransferase 2 family.

The protein localises to the membrane. The protein operates within protein modification; protein glycosylation. It participates in cell surface structure biogenesis; S-layer biogenesis. Hexosyltransferase involved in N-glycan biosynthetic pathway that takes place under low-salt conditions (1.75 M instead of 3.4 M). Participates in the formation of the tetrasaccharide present at 'Asn-532' of S-layer glycoprotein Csg, consisting of a sulfated hexose, 2 hexoses and rhamnose. Together with Agl5, mediates the addition of sugars 1 and 2 to dolichol phosphate in the tetrasaccharide. The protein is Low-salt glycan biosynthesis hexosyltransferase Agl6 (agl6) of Haloferax volcanii (strain ATCC 29605 / DSM 3757 / JCM 8879 / NBRC 14742 / NCIMB 2012 / VKM B-1768 / DS2) (Halobacterium volcanii).